The sequence spans 110 residues: Large ribosomal subunit protein uL22 (110 aa).

This sequence belongs to the universal ribosomal protein uL22 family. Part of the 50S ribosomal subunit.

Its function is as follows. This protein binds specifically to 23S rRNA; its binding is stimulated by other ribosomal proteins, e.g. L4, L17, and L20. It is important during the early stages of 50S assembly. It makes multiple contacts with different domains of the 23S rRNA in the assembled 50S subunit and ribosome. Functionally, the globular domain of the protein is located near the polypeptide exit tunnel on the outside of the subunit, while an extended beta-hairpin is found that lines the wall of the exit tunnel in the center of the 70S ribosome. This Campylobacter fetus subsp. fetus (strain 82-40) protein is Large ribosomal subunit protein uL22.